A 186-amino-acid chain; its full sequence is uncharacterized protein (186 aa).

A signal peptide spans 1 to 21 (MIHVKYIILGFIMVSSLNLYA).

This is an uncharacterized protein from Rickettsia conorii (strain ATCC VR-613 / Malish 7).